A 259-amino-acid chain; its full sequence is UPF0246 protein RD1_0358 (259 aa).

This sequence belongs to the UPF0246 family.

The chain is UPF0246 protein RD1_0358 from Roseobacter denitrificans (strain ATCC 33942 / OCh 114) (Erythrobacter sp. (strain OCh 114)).